The primary structure comprises 225 residues: Ribose-5-phosphate isomerase A (225 aa).

Substrate-binding positions include 33-36 (TGST), 86-89 (DGAD), and 99-102 (KGGG). Glu-108 functions as the Proton acceptor in the catalytic mechanism. Lys-126 serves as a coordination point for substrate.

This sequence belongs to the ribose 5-phosphate isomerase family. Homodimer.

The catalysed reaction is aldehydo-D-ribose 5-phosphate = D-ribulose 5-phosphate. It participates in carbohydrate degradation; pentose phosphate pathway; D-ribose 5-phosphate from D-ribulose 5-phosphate (non-oxidative stage): step 1/1. Catalyzes the reversible conversion of ribose-5-phosphate to ribulose 5-phosphate. This Bordetella petrii (strain ATCC BAA-461 / DSM 12804 / CCUG 43448) protein is Ribose-5-phosphate isomerase A.